Reading from the N-terminus, the 72-residue chain is Translational regulator CsrA (72 aa).

This sequence belongs to the CsrA/RsmA family. Homodimer; the beta-strands of each monomer intercalate to form a hydrophobic core, while the alpha-helices form wings that extend away from the core.

Its subcellular location is the cytoplasm. Its function is as follows. A translational regulator that binds mRNA to regulate translation initiation and/or mRNA stability. Usually binds in the 5'-UTR at or near the Shine-Dalgarno sequence preventing ribosome-binding, thus repressing translation. Its main target seems to be the major flagellin gene, while its function is anatagonized by FliW. This is Translational regulator CsrA from Lachnoclostridium phytofermentans (strain ATCC 700394 / DSM 18823 / ISDg) (Clostridium phytofermentans).